A 458-amino-acid chain; its full sequence is Argininosuccinate lyase (458 aa).

This sequence belongs to the lyase 1 family. Argininosuccinate lyase subfamily.

The protein localises to the cytoplasm. It carries out the reaction 2-(N(omega)-L-arginino)succinate = fumarate + L-arginine. Its pathway is amino-acid biosynthesis; L-arginine biosynthesis; L-arginine from L-ornithine and carbamoyl phosphate: step 3/3. The polypeptide is Argininosuccinate lyase (Vibrio cholerae serotype O1 (strain ATCC 39541 / Classical Ogawa 395 / O395)).